The chain runs to 381 residues: Glycerol-3-phosphate dehydrogenase [NAD(+)] (381 aa).

Positions 1-27 (MTAMDRLDHVSNQLAAKRQKKNPEGKP) are disordered. NAD(+)-binding positions include 34–39 (GSGNWG), F66, and F122. K145 serves as a coordination point for substrate. An NAD(+)-binding site is contributed by A178. K238 acts as the Proton acceptor in catalysis. NAD(+) contacts are provided by R303 and Q332. A substrate-binding site is contributed by 303 to 304 (RN).

This sequence belongs to the NAD-dependent glycerol-3-phosphate dehydrogenase family.

The enzyme catalyses sn-glycerol 3-phosphate + NAD(+) = dihydroxyacetone phosphate + NADH + H(+). The sequence is that of Glycerol-3-phosphate dehydrogenase [NAD(+)] (GPD) from Pichia angusta (Yeast).